The primary structure comprises 76 residues: MAKFKIKKGDDVKIITGDDKGKIGKVLSVLPKKSQVIVEGCKIAKKAIKPSEKNPKGGFINKEMPMDISNVALVEG.

It belongs to the universal ribosomal protein uL24 family. In terms of assembly, part of the 50S ribosomal subunit.

One of two assembly initiator proteins, it binds directly to the 5'-end of the 23S rRNA, where it nucleates assembly of the 50S subunit. Functionally, one of the proteins that surrounds the polypeptide exit tunnel on the outside of the subunit. The chain is Large ribosomal subunit protein uL24 from Campylobacter hominis (strain ATCC BAA-381 / DSM 21671 / CCUG 45161 / LMG 19568 / NCTC 13146 / CH001A).